A 451-amino-acid chain; its full sequence is Bifunctional protein GlmU (451 aa).

Positions 1 to 229 (MQRHAIVLAA…FEEIMGVNDR (229 aa)) are pyrophosphorylase. UDP-N-acetyl-alpha-D-glucosamine contacts are provided by residues 8 to 11 (LAAG), Lys22, Gln72, and 77 to 78 (GT). Mg(2+) is bound at residue Asp102. Positions 139, 154, and 227 each coordinate UDP-N-acetyl-alpha-D-glucosamine. Asn227 lines the Mg(2+) pocket. The linker stretch occupies residues 230–250 (VMLSEAEKAFRKRINEQHMKN). The tract at residues 251–451 (GVTIIDPVTT…QTTKEGYLKK (201 aa)) is N-acetyltransferase. Residues Arg332 and Lys350 each contribute to the UDP-N-acetyl-alpha-D-glucosamine site. His362 functions as the Proton acceptor in the catalytic mechanism. UDP-N-acetyl-alpha-D-glucosamine is bound by residues Tyr365 and Asn376. Acetyl-CoA-binding positions include 385-386 (NY), Ala422, and Arg439.

The protein in the N-terminal section; belongs to the N-acetylglucosamine-1-phosphate uridyltransferase family. In the C-terminal section; belongs to the transferase hexapeptide repeat family. As to quaternary structure, homotrimer. Mg(2+) is required as a cofactor.

The protein localises to the cytoplasm. The enzyme catalyses alpha-D-glucosamine 1-phosphate + acetyl-CoA = N-acetyl-alpha-D-glucosamine 1-phosphate + CoA + H(+). It catalyses the reaction N-acetyl-alpha-D-glucosamine 1-phosphate + UTP + H(+) = UDP-N-acetyl-alpha-D-glucosamine + diphosphate. It participates in nucleotide-sugar biosynthesis; UDP-N-acetyl-alpha-D-glucosamine biosynthesis; N-acetyl-alpha-D-glucosamine 1-phosphate from alpha-D-glucosamine 6-phosphate (route II): step 2/2. It functions in the pathway nucleotide-sugar biosynthesis; UDP-N-acetyl-alpha-D-glucosamine biosynthesis; UDP-N-acetyl-alpha-D-glucosamine from N-acetyl-alpha-D-glucosamine 1-phosphate: step 1/1. Its pathway is bacterial outer membrane biogenesis; LPS lipid A biosynthesis. Its function is as follows. Catalyzes the last two sequential reactions in the de novo biosynthetic pathway for UDP-N-acetylglucosamine (UDP-GlcNAc). The C-terminal domain catalyzes the transfer of acetyl group from acetyl coenzyme A to glucosamine-1-phosphate (GlcN-1-P) to produce N-acetylglucosamine-1-phosphate (GlcNAc-1-P), which is converted into UDP-GlcNAc by the transfer of uridine 5-monophosphate (from uridine 5-triphosphate), a reaction catalyzed by the N-terminal domain. In Staphylococcus saprophyticus subsp. saprophyticus (strain ATCC 15305 / DSM 20229 / NCIMB 8711 / NCTC 7292 / S-41), this protein is Bifunctional protein GlmU.